Consider the following 346-residue polypeptide: dTDP-glucose 4,6-dehydratase (346 aa).

NAD(+)-binding positions include 17–18, 38–41, 64–65, 86–90, and Thr-105; these read FI, DKLT, DI, and LAAES. Substrate is bound at residue Ser-90. Thr-139 serves as a coordination point for substrate. Asp-140 (proton donor) is an active-site residue. Catalysis depends on proton acceptor residues Glu-141 and Tyr-165. 165 to 169 provides a ligand contact to NAD(+); the sequence is YSASK. Asn-194 is a substrate binding site. Asn-195 is an NAD(+) binding site. Substrate is bound by residues 204–205, 220–222, Arg-229, Asn-264, and 298–302; these read KL, PVY, and DRPGH.

It belongs to the NAD(P)-dependent epimerase/dehydratase family. dTDP-glucose dehydratase subfamily. As to quaternary structure, homodimer. NAD(+) serves as cofactor.

The catalysed reaction is dTDP-alpha-D-glucose = dTDP-4-dehydro-6-deoxy-alpha-D-glucose + H2O. It functions in the pathway carbohydrate biosynthesis; dTDP-L-rhamnose biosynthesis. The protein operates within bacterial outer membrane biogenesis; LPS O-antigen biosynthesis. Catalyzes the dehydration of dTDP-D-glucose to form dTDP-6-deoxy-D-xylo-4-hexulose via a three-step process involving oxidation, dehydration and reduction. This is dTDP-glucose 4,6-dehydratase from Neisseria gonorrhoeae.